We begin with the raw amino-acid sequence, 525 residues long: Heat shock factor protein 1 (525 aa).

Position 1 is an N-acetylmethionine (Met-1). The segment at 15-120 is DNA-binding domain; sequence VPAFLTKLWT…LLENIKRKVT (106 aa). The residue at position 80 (Lys-80) is an N6-acetyllysine. Lys-91 carries the N6-acetyllysine; alternate modification. Residue Lys-91 forms a Glycyl lysine isopeptide (Lys-Gly) (interchain with G-Cter in SUMO2); alternate linkage. N6-acetyllysine is present on Lys-118. Phosphoserine; by MAPKAPK2 is present on Ser-121. The interval 130-203 is hydrophobic repeat HR-A/B; sequence IKIRQDSVTK…ISLVQSNRIL (74 aa). A Glycyl lysine isopeptide (Lys-Gly) (interchain with G-Cter in SUMO2) cross-link involves residue Lys-131. The residue at position 142 (Thr-142) is a Phosphothreonine; by CK2. 2 positions are modified to N6-acetyllysine: Lys-150 and Lys-188. The d domain stretch occupies residues 203-224; that stretch reads LGVKRKIPLMLNDGGPAHPMPK. N6-acetyllysine; alternate is present on Lys-208. Residue Lys-208 forms a Glycyl lysine isopeptide (Lys-Gly) (interchain with G-Cter in SUMO2); alternate linkage. A regulatory domain region spans residues 221–310; that stretch reads PMPKYGRQYS…PPSPPQSPRA (90 aa). Residue Lys-224 forms a Glycyl lysine isopeptide (Lys-Gly) (interchain with G-Cter in SUMO2) linkage. Ser-230 carries the phosphoserine; by CAMK2A modification. The tract at residues 266–365 is disordered; sequence SDITELAPGS…RPPSPLPASA (100 aa). Residues 272–283 show a composition bias toward low complexity; the sequence is APGSPVASSGGS. Ser-275 and Ser-292 each carry phosphoserine. An N6-acetyllysine; alternate modification is found at Lys-298. A Glycyl lysine isopeptide (Lys-Gly) (interchain with G-Cter in SUMO2); alternate cross-link involves residue Lys-298. Lys-298 is covalently cross-linked (Glycyl lysine isopeptide (Lys-Gly) (interchain with G-Cter in SUMO); alternate). Residue Ser-303 is modified to Phosphoserine; by GSK3-beta. Ser-307 bears the Phosphoserine; by MAPK3 mark. A phosphoserine mark is found at Ser-314 and Ser-319. Ser-320 carries the post-translational modification Phosphoserine; by PKA. Thr-324 carries the post-translational modification Phosphothreonine. At Ser-327 the chain carries Phosphoserine; by MAPK12. The residue at position 346 (Ser-346) is a Phosphoserine. At Ser-359 the chain carries Phosphoserine; by MAPK8. Positions 367 to 525 are transactivation domain; sequence EKCLSVACLD…PPKAKDPTVS (159 aa). Residues 380–405 are hydrophobic repeat HR-C; it reads LSDHLDAMDSNLDNLQTMLTSHGFSV. The short motif at 408–416 is the 9aaTAD element; sequence STLLDLFSP. Position 415 is a phosphoserine; by PLK1 (Ser-415). Ser-440 carries the phosphoserine modification. The segment at 495 to 525 is disordered; that stretch reads YFSEGDDYSDDPTISLLTGSEPPKAKDPTVS. Lys-520 carries the N6-acetyllysine modification.

Belongs to the HSF family. Monomer; cytoplasmic latent and transcriptionally inactive monomeric form in unstressed cells. Homotrimer; in response to stress, such as heat shock, homotrimerizes and translocates into the nucleus, binds to heat shock element (HSE) sequences in promoter of heat shock protein (HSP) genes and acquires transcriptional ability. Interacts (via monomeric form) with FKBP4; this interaction occurs in unstressed cells. Associates (via monomeric form) with HSP90 proteins in a multichaperone complex in unnstressed cell; this association maintains HSF1 in a non-DNA-binding and transcriptional inactive form by preventing HSF1 homotrimerization. Homotrimeric transactivation activity is modulated by protein-protein interactions and post-translational modifications. Interacts with HSP90AA1; this interaction is decreased in a IER5-dependent manner, promoting HSF1 accumulation in the nucleus, homotrimerization and DNA-binding activities. Part (via regulatory domain in the homotrimeric form) of a large heat shock-induced HSP90-dependent multichaperone complex at least composed of FKBP4, FKBP5, HSP90 proteins, PPID, PPP5C and PTGES3; this association maintains the HSF1 homotrimeric DNA-bound form in a transcriptionally inactive form. Interacts with BAG3 (via BAG domain); this interaction occurs in normal and heat-shocked cells promoting nuclear shuttling of HSF1 in a BAG3-dependent manner. Interacts (via homotrimeric and hyperphosphorylated form) with FKBP4; this interaction occurs upon heat shock in a HSP90-dependent multichaperone complex. Interacts (via homotrimeric form preferentially) with EEF1A proteins. In heat shocked cells, stress-denatured proteins compete with HSF1 homotrimeric DNA-bound form for association of the HSP90-dependent multichaperone complex, and hence alleviating repression of HSF1-mediated transcriptional activity. Interacts (via homotrimeric form preferentially) with DAXX; this interaction relieves homotrimeric HSF1 from repression of its transcriptional activity by HSP90-dependent multichaperone complex upon heat shock. Interacts (via D domain and preferentially with hyperphosphorylated form) with JNK1; this interaction occurs under both normal growth conditions and immediately upon heat shock. Interacts (via D domain and preferentially with hyperphosphorylated form) with MAPK3; this interaction occurs upon heat shock. Interacts with IER5 (via central region); this interaction promotes PPP2CA-induced dephosphorylation on Ser-121, Ser-307, Ser-314 and Thr-324 and HSF1 transactivation activity. Found in a ribonucleoprotein complex composed of the HSF1 homotrimeric form, translation elongation factor eEF1A proteins and non-coding RNA heat shock RNA-1 (HSR1); this complex occurs upon heat shock and stimulates HSF1 DNA-binding activity. Interacts (via transactivation domain) with HSPA1A/HSP70 and DNAJB1; these interactions result in the inhibition of heat shock- and HSF1-induced transcriptional activity during the attenuation and recovery phase from heat shock. Interacts (via Ser-303 and Ser-307 phosphorylated form) with YWHAE; this interaction promotes HSF1 sequestration in the cytoplasm in an ERK-dependent manner. Found in a complex with IER5 and PPP2CA. Interacts with TPR; this interaction increases upon heat shock and stimulates export of HSP70 mRNA. Interacts with SYMPK (via N-terminus) and CSTF2; these interactions occur upon heat shock. Interacts (via transactivation domain) with HSPA8. Interacts with EEF1D; this interaction occurs at heat shock promoter element (HSE) sequences. Interacts with MAPKAPK2. Interacts with PRKACA/PKA. Interacts (via transactivation domain) with GTF2A2. Interacts (via transactivation domain) with GTF2B. Interacts (via transactivation domain) with TBP. Interacts with CDK9, CCNT1 and EP300. Interacts (via N-terminus) with XRCC5 (via N-terminus) and XRCC6 (via N-terminus); these interactions are direct and prevent XRCC5/XRCC6 heterodimeric binding and non-homologous end joining (NHEJ) repair activities induced by ionizing radiation (IR). Interacts with PLK1; this interaction occurs during the early mitotic period, increases upon heat shock but does not modulate neither HSF1 homotrimerization and DNA-binding activities. Interacts with CDC20; this interaction occurs in mitosis in a MAD2L1-dependent manner and prevents PLK1-stimulated degradation of HSF1 by blocking the recruitment of the SCF(BTRC) ubiquitin ligase complex. Interacts with MAD2L1; this interaction occurs in mitosis. Interacts with BTRC; this interaction occurs during mitosis, induces its ubiquitin-dependent degradation following stimulus-dependent phosphorylation, a process inhibited by CDC20. Interacts with HSP90AA1 and HSP90AB1. Forms a complex with TTC5/STRAP and p300/EP300; these interactions augment chromatin-bound HSF1 and p300/EP300 histone acetyltransferase activity. Phosphorylated. Phosphorylated in unstressed cells; this phosphorylation is constitutive and implicated in the repression of HSF1 transcriptional activity. Phosphorylated on Ser-121 by MAPKAPK2; this phosphorylation promotes interaction with HSP90 proteins and inhibits HSF1 homotrimerization, DNA-binding and transactivation activities. Phosphorylation on Ser-303 by GSK3B/GSK3-beta and on Ser-307 by MAPK3 within the regulatory domain is involved in the repression of HSF1 transcriptional activity and occurs in a RAF1-dependent manner. Phosphorylation on Ser-303 and Ser-307 increases HSF1 nuclear export in a YWHAE- and XPO1/CRM1-dependent manner. Phosphorylation on Ser-307 is a prerequisite for phosphorylation on Ser-303. According to, Ser-303 is not phosphorylated in unstressed cells. Phosphorylated on Ser-415 by PLK1; phosphorylation promotes nuclear translocation upon heat shock. Hyperphosphorylated upon heat shock and during the attenuation and recovery phase period of the heat shock response. Phosphorylated on Thr-142; this phosphorylation increases HSF1 transactivation activity upon heat shock. Phosphorylation on Ser-230 by CAMK2A; this phosphorylation enhances HSF1 transactivation activity upon heat shock. Phosphorylation on Ser-327 by MAPK12; this phosphorylation enhances HSF1 nuclear translocation, homotrimerization and transactivation activities upon heat shock. Phosphorylated on Ser-320 by PRKACA/PKA; this phosphorylation promotes nuclear localization and transcriptional activity upon heat shock. Phosphorylated on Ser-359 by MAPK8; this phosphorylation occurs upon heat shock, induces HSF1 translocation into nuclear stress bodies and negatively regulates transactivation activity. Neither basal nor stress-inducible phosphorylation on Ser-230, Ser-292, Ser-303, Ser-307, Ser-314, Ser-319, Ser-320, Thr-324, Ser-327, Ser-339, Ser-346, Ser-359 and Ser-364 within the regulatory domain is involved in the regulation of HSF1 subcellular localization or DNA-binding activity; however, it negatively regulates HSF1 transactivation activity. Phosphorylated by PLK1 in the early mitotic period; this phosphorylation regulates HSF1 localization to the spindle pole, the recruitment of the SCF(BTRC) ubiquitin ligase complex inducing HSF1 degradation, and hence mitotic progression. Dephosphorylated on Ser-121, Ser-307, Ser-314, Thr-324 by phosphatase PPP2CA in an IER5-dependent manner, leading to HSF1-mediated transactivation activity. In terms of processing, sumoylated with SUMO1 and SUMO2 upon heat shock in a ERK2-dependent manner. Sumoylated by SUMO1 on Lys-298; sumoylation occurs upon heat shock and promotes its localization to nuclear stress bodies and DNA-binding activity. Phosphorylation on Ser-303 and Ser-307 is probably a prerequisite for sumoylation. Post-translationally, acetylated on Lys-118; this acetylation is decreased in a IER5-dependent manner. Acetylated on Lys-118, Lys-208 and Lys-298; these acetylations occur in a EP300-dependent manner. Acetylated on Lys-80; this acetylation inhibits DNA-binding activity upon heat shock. Deacetylated on Lys-80 by SIRT1; this deacetylation increases DNA-binding activity. Ubiquitinated by SCF(BTRC) and degraded following stimulus-dependent phosphorylation by PLK1 in mitosis. Polyubiquitinated. Undergoes proteasomal degradation upon heat shock and during the attenuation and recovery phase period of the heat shock response.

It localises to the nucleus. It is found in the cytoplasm. Its subcellular location is the nucleoplasm. The protein resides in the perinuclear region. The protein localises to the cytoskeleton. It localises to the spindle pole. It is found in the microtubule organizing center. Its subcellular location is the centrosome. The protein resides in the chromosome. The protein localises to the centromere. It localises to the kinetochore. Functionally, functions as a stress-inducible and DNA-binding transcription factor that plays a central role in the transcriptional activation of the heat shock response (HSR), leading to the expression of a large class of molecular chaperones, heat shock proteins (HSPs), that protect cells from cellular insult damage. In unstressed cells, is present in a HSP90-containing multichaperone complex that maintains it in a non-DNA-binding inactivated monomeric form. Upon exposure to heat and other stress stimuli, undergoes homotrimerization and activates HSP gene transcription through binding to site-specific heat shock elements (HSEs) present in the promoter regions of HSP genes. Upon heat shock stress, forms a chromatin-associated complex with TTC5/STRAP and p300/EP300 to stimulate HSR transcription, therefore increasing cell survival. Activation is reversible, and during the attenuation and recovery phase period of the HSR, returns to its unactivated form. Binds to inverted 5'-NGAAN-3' pentamer DNA sequences. Binds to chromatin at heat shock gene promoters. Activates transcription of transcription factor FOXR1 which in turn activates transcription of the heat shock chaperones HSPA1A and HSPA6 and the antioxidant NADPH-dependent reductase DHRS2. Also serves several other functions independently of its transcriptional activity. Involved in the repression of Ras-induced transcriptional activation of the c-fos gene in heat-stressed cells. Positively regulates pre-mRNA 3'-end processing and polyadenylation of HSP70 mRNA upon heat-stressed cells in a symplekin (SYMPK)-dependent manner. Plays a role in nuclear export of stress-induced HSP70 mRNA. Plays a role in the regulation of mitotic progression. Also plays a role as a negative regulator of non-homologous end joining (NHEJ) repair activity in a DNA damage-dependent manner. Involved in stress-induced cancer cell proliferation in a IER5-dependent manner. The polypeptide is Heat shock factor protein 1 (Bos taurus (Bovine)).